A 126-amino-acid chain; its full sequence is Topoisomerase I damage affected protein 8 (126 aa).

The PA14 domain maps to 1–110 (MTGYFLPPQT…VTTVSDDFAG (110 aa)).

The protein belongs to the flocculin family.

The chain is Topoisomerase I damage affected protein 8 (TDA8) from Saccharomyces cerevisiae (strain ATCC 204508 / S288c) (Baker's yeast).